The primary structure comprises 117 residues: S-adenosylmethionine decarboxylase proenzyme (117 aa).

Ser-63 acts as the Schiff-base intermediate with substrate; via pyruvic acid in catalysis. Ser-63 carries the post-translational modification Pyruvic acid (Ser); by autocatalysis. Catalysis depends on His-68, which acts as the Proton acceptor; for processing activity. The active-site Proton donor; for catalytic activity is Cys-83.

The protein belongs to the prokaryotic AdoMetDC family. Type 1 subfamily. In terms of assembly, heterotetramer of two alpha and two beta chains arranged as a dimer of alpha/beta heterodimers. The cofactor is pyruvate. In terms of processing, is synthesized initially as an inactive proenzyme. Formation of the active enzyme involves a self-maturation process in which the active site pyruvoyl group is generated from an internal serine residue via an autocatalytic post-translational modification. Two non-identical subunits are generated from the proenzyme in this reaction, and the pyruvate is formed at the N-terminus of the alpha chain, which is derived from the carboxyl end of the proenzyme. The post-translation cleavage follows an unusual pathway, termed non-hydrolytic serinolysis, in which the side chain hydroxyl group of the serine supplies its oxygen atom to form the C-terminus of the beta chain, while the remainder of the serine residue undergoes an oxidative deamination to produce ammonia and the pyruvoyl group blocking the N-terminus of the alpha chain.

The catalysed reaction is S-adenosyl-L-methionine + H(+) = S-adenosyl 3-(methylsulfanyl)propylamine + CO2. It participates in amine and polyamine biosynthesis; S-adenosylmethioninamine biosynthesis; S-adenosylmethioninamine from S-adenosyl-L-methionine: step 1/1. Catalyzes the decarboxylation of S-adenosylmethionine to S-adenosylmethioninamine (dcAdoMet), the propylamine donor required for the synthesis of the polyamines spermine and spermidine from the diamine putrescine. In Methanococcus aeolicus (strain ATCC BAA-1280 / DSM 17508 / OCM 812 / Nankai-3), this protein is S-adenosylmethionine decarboxylase proenzyme.